Here is a 100-residue protein sequence, read N- to C-terminus: Putative pterin-4-alpha-carbinolamine dehydratase (100 aa).

It belongs to the pterin-4-alpha-carbinolamine dehydratase family.

It catalyses the reaction (4aS,6R)-4a-hydroxy-L-erythro-5,6,7,8-tetrahydrobiopterin = (6R)-L-erythro-6,7-dihydrobiopterin + H2O. The polypeptide is Putative pterin-4-alpha-carbinolamine dehydratase (Allorhizobium ampelinum (strain ATCC BAA-846 / DSM 112012 / S4) (Agrobacterium vitis (strain S4))).